The following is a 323-amino-acid chain: o-succinylbenzoate synthase (323 aa).

K134 acts as the Proton donor in catalysis. Mg(2+) is bound by residues D162, E191, and D214. The active-site Proton acceptor is K236.

This sequence belongs to the mandelate racemase/muconate lactonizing enzyme family. MenC type 1 subfamily. A divalent metal cation serves as cofactor.

The catalysed reaction is (1R,6R)-6-hydroxy-2-succinyl-cyclohexa-2,4-diene-1-carboxylate = 2-succinylbenzoate + H2O. The protein operates within quinol/quinone metabolism; 1,4-dihydroxy-2-naphthoate biosynthesis; 1,4-dihydroxy-2-naphthoate from chorismate: step 4/7. Its pathway is quinol/quinone metabolism; menaquinone biosynthesis. Functionally, converts 2-succinyl-6-hydroxy-2,4-cyclohexadiene-1-carboxylate (SHCHC) to 2-succinylbenzoate (OSB). The sequence is that of o-succinylbenzoate synthase from Yersinia pseudotuberculosis serotype IB (strain PB1/+).